We begin with the raw amino-acid sequence, 371 residues long: Tetraacyldisaccharide 4'-kinase (371 aa).

Position 48–55 (S48–T55) interacts with ATP.

It belongs to the LpxK family.

The catalysed reaction is a lipid A disaccharide + ATP = a lipid IVA + ADP + H(+). It participates in glycolipid biosynthesis; lipid IV(A) biosynthesis; lipid IV(A) from (3R)-3-hydroxytetradecanoyl-[acyl-carrier-protein] and UDP-N-acetyl-alpha-D-glucosamine: step 6/6. Transfers the gamma-phosphate of ATP to the 4'-position of a tetraacyldisaccharide 1-phosphate intermediate (termed DS-1-P) to form tetraacyldisaccharide 1,4'-bis-phosphate (lipid IVA). The protein is Tetraacyldisaccharide 4'-kinase of Chlorobium chlorochromatii (strain CaD3).